The primary structure comprises 300 residues: Probable alpha-L-glutamate ligase (300 aa).

One can recognise an ATP-grasp domain in the interval 104–287 (LQLLARQGID…IASRMIAWIE (184 aa)). Residues Lys-141, 178–179 (EY), Asp-187, and 211–213 (RSN) contribute to the ATP site. The Mg(2+) site is built by Asp-248, Glu-260, and Asn-262. Mn(2+)-binding residues include Asp-248, Glu-260, and Asn-262.

This sequence belongs to the RimK family. It depends on Mg(2+) as a cofactor. The cofactor is Mn(2+).

This is Probable alpha-L-glutamate ligase from Klebsiella pneumoniae (strain 342).